The chain runs to 553 residues: Probable bifunctional riboflavin biosynthesis protein RIBA 2, chloroplastic (553 aa).

Residues 1–56 (MASISPTSSSVAALRGHPVQFVKGGAVSKEAKGSISFSPVANSNNANVKFTGLRVA) constitute a chloroplast transit peptide. A DHBP synthase region spans residues 62–336 (DGAFPGDGYS…IADLIRYRRK (275 aa)). The interval 70–90 (YSGNDNTVLPKSTSVRGQDYP) is disordered. Polar residues predominate over residues 72–85 (GNDNTVLPKSTSVR). D-ribulose 5-phosphate-binding positions include 160 to 161 (RE), Asp-165, 275 to 279 (RAGHT), and Glu-299. Position 161 (Glu-161) interacts with Mg(2+). His-278 contributes to the Mg(2+) binding site. A GTP cyclohydrolase II region spans residues 337–553 (RDRLVERSSV…TGSNGAKGEH (217 aa)). A GTP-binding site is contributed by 387 to 391 (RVHSE). Residues Cys-392, Cys-403, and Cys-405 each coordinate Zn(2+). Residues Gln-408, 431–433 (EGR), and Thr-453 each bind GTP. The active-site Proton acceptor; for GTP cyclohydrolase activity is the Asp-465. The active-site Nucleophile; for GTP cyclohydrolase activity is Arg-467. Residues Thr-488 and Lys-493 each contribute to the GTP site.

It in the N-terminal section; belongs to the DHBP synthase family. The protein in the C-terminal section; belongs to the GTP cyclohydrolase II family. It depends on Mg(2+) as a cofactor. The cofactor is Mn(2+). Requires Zn(2+) as cofactor.

It is found in the plastid. Its subcellular location is the chloroplast. It catalyses the reaction D-ribulose 5-phosphate = (2S)-2-hydroxy-3-oxobutyl phosphate + formate + H(+). The catalysed reaction is GTP + 4 H2O = 2,5-diamino-6-hydroxy-4-(5-phosphoribosylamino)-pyrimidine + formate + 2 phosphate + 3 H(+). It participates in cofactor biosynthesis; riboflavin biosynthesis; 2-hydroxy-3-oxobutyl phosphate from D-ribulose 5-phosphate: step 1/1. It functions in the pathway cofactor biosynthesis; riboflavin biosynthesis; 5-amino-6-(D-ribitylamino)uracil from GTP: step 1/4. Its function is as follows. Involved in riboflavin biosynthesis. Catalyzes both the conversion of D-ribulose 5-phosphate to formate and 3,4-dihydroxy-2-butanone 4-phosphate and the conversion of GTP to 2,5-diamino-6-ribosylamino-4(3H)-pyrimidinone 5'-phosphate (DARP), formate and pyrophosphate. This chain is Probable bifunctional riboflavin biosynthesis protein RIBA 2, chloroplastic (RIBA2), found in Oryza sativa subsp. japonica (Rice).